A 210-amino-acid chain; its full sequence is uncharacterized protein (210 aa).

Transmembrane regions (helical) follow at residues isoleucine 42 to valine 62, alanine 66 to methionine 86, valine 126 to glutamine 146, isoleucine 147 to leucine 167, and alanine 189 to isoleucine 209.

It belongs to the Rht family.

Its subcellular location is the cell membrane. This is an uncharacterized protein from Haemophilus influenzae (strain ATCC 51907 / DSM 11121 / KW20 / Rd).